A 231-amino-acid polypeptide reads, in one-letter code: MKKTLLASSLAVGLGIVAGNAGHEAHASEADLNKASLAQMAQSNDQTLNQKPIEAGAYNYTFDYEGFTYHFESDGTHFAWNYHATGTNGADMSAQAPATNNVAPSAVQANQVQSQEVEAPQNAQTQQPQASTSNNSQVTATPTESKSSEGSSVNVNAHLKQIAQRESGGNIHAVNPTSGAAGKYQFLQSTWDSVAPAKYKGVSPANAPESVQDAAAVKLYNTGGAGHWVTA.

A signal peptide spans 1 to 27 (MKKTLLASSLAVGLGIVAGNAGHEAHA). Over residues 106 to 116 (AVQANQVQSQE) the composition is skewed to polar residues. Residues 106 to 153 (AVQANQVQSQEVEAPQNAQTQQPQASTSNNSQVTATPTESKSSEGSSV) form a disordered region. A compositionally biased stretch (low complexity) spans 119–137 (APQNAQTQQPQASTSNNSQ). Residues 138 to 153 (VTATPTESKSSEGSSV) are compositionally biased toward polar residues.

The protein belongs to the transglycosylase family. SceD subfamily.

The protein resides in the secreted. Is able to cleave peptidoglycan and affects clumping and separation of bacterial cells. The chain is Probable transglycosylase SceD (sceD) from Staphylococcus aureus (strain USA300).